Consider the following 609-residue polypeptide: Kelch domain-containing protein 10 homolog (609 aa).

The tract at residues 103–146 is disordered; that stretch reads ASDLDEEEEEEDDDVDVDVDYGDTDSESEFEEMYSDEWTSSSDE. Residues 104–137 are compositionally biased toward acidic residues; sequence SDLDEEEEEEDDDVDVDVDYGDTDSESEFEEMYS. Kelch repeat units lie at residues 214–277, 279–334, 335–381, 389–437, 458–508, and 510–554; these read HLYS…IHNN, LISH…IHKH, FLYT…RYRH, HIFV…GNRG, EAFI…HSDN, and CMYV…YNDN. The interval 576 to 609 is disordered; that stretch reads LPPQRRRRLDTSQPDPSMLISLYSNPKRARSSTQ.

Interacts with Elongin-C; may be the substrate recognition component of an E3 ubiquitin ligase complex.

Activates the Pk92B/DASK1-MAPK signaling cascade. This Drosophila melanogaster (Fruit fly) protein is Kelch domain-containing protein 10 homolog (slim).